Reading from the N-terminus, the 842-residue chain is Leucine--tRNA ligase (842 aa).

The 'HIGH' region motif lies at 44–55; the sequence is PYPSANGLHVGH. The 'KMSKS' region motif lies at 619–623; sequence KMSKS. Position 622 (Lys622) interacts with ATP.

This sequence belongs to the class-I aminoacyl-tRNA synthetase family.

It is found in the cytoplasm. The catalysed reaction is tRNA(Leu) + L-leucine + ATP = L-leucyl-tRNA(Leu) + AMP + diphosphate. The chain is Leucine--tRNA ligase from Borrelia duttonii (strain Ly).